A 365-amino-acid chain; its full sequence is Caffeic acid 3-O-methyltransferase (365 aa).

Residue Asn-133 participates in (E)-ferulate binding. S-adenosyl-L-homocysteine contacts are provided by Gly-210, Asp-233, Asp-253, Met-254, Met-266, and Lys-267. Residue His-271 is the Proton acceptor of the active site. Asp-272 provides a ligand contact to (E)-5-hydroxyferulate.

This sequence belongs to the class I-like SAM-binding methyltransferase superfamily. Cation-independent O-methyltransferase family. COMT subfamily. In terms of assembly, homodimer.

The enzyme catalyses (E)-caffeate + S-adenosyl-L-methionine = (E)-ferulate + S-adenosyl-L-homocysteine + H(+). It carries out the reaction (E)-5-hydroxyferulate + S-adenosyl-L-methionine = (E)-sinapate + S-adenosyl-L-homocysteine + H(+). The protein operates within aromatic compound metabolism; phenylpropanoid biosynthesis. With respect to regulation, inhibited by Cu(2+), and to a lesser extent by Ni(2+), Mn(2+), Co(2+), Fe(3+) and Zn(2+). Unaffected by Fe(2+) and Mg(2+). Catalyzes the conversion of caffeic acid to ferulic acid and of 5-hydroxyferulic acid to sinapic acid. The resulting products may subsequently be converted to the corresponding alcohols that are incorporated into lignins. The chain is Caffeic acid 3-O-methyltransferase from Ammi majus (Bishop's weed).